The sequence spans 452 residues: 23S rRNA (uracil(1939)-C(5))-methyltransferase RlmD (452 aa).

One can recognise a TRAM domain in the interval 1–57; sequence METEVNVAEISALDYEGRGVTKVGGKTVFIKGALPSERVGFRIVRQKKQFDEAEAVA. [4Fe-4S] cluster contacts are provided by Cys-70, Cys-76, Cys-79, and Cys-157. The S-adenosyl-L-methionine site is built by Gln-269, Phe-298, Asn-303, Glu-319, Asn-347, and Asp-368. Residue Cys-395 is the Nucleophile of the active site.

The protein belongs to the class I-like SAM-binding methyltransferase superfamily. RNA M5U methyltransferase family. RlmD subfamily.

It catalyses the reaction uridine(1939) in 23S rRNA + S-adenosyl-L-methionine = 5-methyluridine(1939) in 23S rRNA + S-adenosyl-L-homocysteine + H(+). In terms of biological role, catalyzes the formation of 5-methyl-uridine at position 1939 (m5U1939) in 23S rRNA. The protein is 23S rRNA (uracil(1939)-C(5))-methyltransferase RlmD of Neisseria lactamica (strain 020-06).